Reading from the N-terminus, the 394-residue chain is Tryptophan synthase beta chain (394 aa).

An N6-(pyridoxal phosphate)lysine modification is found at lysine 84.

The protein belongs to the TrpB family. In terms of assembly, tetramer of two alpha and two beta chains. The cofactor is pyridoxal 5'-phosphate.

It carries out the reaction (1S,2R)-1-C-(indol-3-yl)glycerol 3-phosphate + L-serine = D-glyceraldehyde 3-phosphate + L-tryptophan + H2O. Its pathway is amino-acid biosynthesis; L-tryptophan biosynthesis; L-tryptophan from chorismate: step 5/5. Functionally, the beta subunit is responsible for the synthesis of L-tryptophan from indole and L-serine. This Clostridium acetobutylicum (strain ATCC 824 / DSM 792 / JCM 1419 / IAM 19013 / LMG 5710 / NBRC 13948 / NRRL B-527 / VKM B-1787 / 2291 / W) protein is Tryptophan synthase beta chain.